Consider the following 200-residue polypeptide: NAD(P)H dehydrogenase (quinone) (200 aa).

Residues Val4–Val191 enclose the Flavodoxin-like domain. FMN-binding positions include Ser10–Val15 and Thr79–Phe81. Tyr12 contributes to the NAD(+) binding site. A substrate-binding site is contributed by Trp99. FMN is bound by residues Ser114 to Gly120 and His135.

This sequence belongs to the WrbA family. The cofactor is FMN.

The enzyme catalyses a quinone + NADH + H(+) = a quinol + NAD(+). It catalyses the reaction a quinone + NADPH + H(+) = a quinol + NADP(+). This chain is NAD(P)H dehydrogenase (quinone), found in Burkholderia cenocepacia (strain HI2424).